The chain runs to 504 residues: UDP-N-acetylmuramoylalanine--D-glutamate ligase (504 aa).

G129–T135 provides a ligand contact to ATP.

Belongs to the MurCDEF family.

The protein resides in the cytoplasm. The enzyme catalyses UDP-N-acetyl-alpha-D-muramoyl-L-alanine + D-glutamate + ATP = UDP-N-acetyl-alpha-D-muramoyl-L-alanyl-D-glutamate + ADP + phosphate + H(+). It functions in the pathway cell wall biogenesis; peptidoglycan biosynthesis. Functionally, cell wall formation. Catalyzes the addition of glutamate to the nucleotide precursor UDP-N-acetylmuramoyl-L-alanine (UMA). The protein is UDP-N-acetylmuramoylalanine--D-glutamate ligase of Burkholderia mallei (strain NCTC 10247).